The following is a 127-amino-acid chain: Cystatin cpi-1 (127 aa).

Positions 1–19 are cleaved as a signal peptide; that stretch reads MFFPIVWLSVLLIISKSFA. Positions 68-72 match the Secondary area of contact motif; it reads QVVAG. A disulfide bridge links C86 with C98.

The protein belongs to the cystatin family.

Its function is as follows. Cysteine protease inhibitor which inhibits members of the peptidase C1 family. Does not inhibit asparaginyl endopeptidase. The polypeptide is Cystatin cpi-1 (Brugia malayi (Filarial nematode worm)).